A 778-amino-acid chain; its full sequence is LPS-assembly protein LptD (778 aa).

The signal sequence occupies residues 1–23 (MKTRYSVLSVAMTAAFYTQYAQA).

The protein belongs to the LptD family. In terms of assembly, component of the lipopolysaccharide transport and assembly complex. Interacts with LptE and LptA.

The protein localises to the cell outer membrane. Functionally, together with LptE, is involved in the assembly of lipopolysaccharide (LPS) at the surface of the outer membrane. This chain is LPS-assembly protein LptD, found in Actinobacillus pleuropneumoniae serotype 7 (strain AP76).